The following is a 196-amino-acid chain: Putative NADH dehydrogenase/NAD(P)H nitroreductase SCO5049 (196 aa).

It belongs to the nitroreductase family. HadB/RutE subfamily. Requires FMN as cofactor.

This Streptomyces coelicolor (strain ATCC BAA-471 / A3(2) / M145) protein is Putative NADH dehydrogenase/NAD(P)H nitroreductase SCO5049.